The chain runs to 397 residues: MSVGRRRVKLLGILMMANVFIYLIVEVSKNSSQDKNGKGGVIIPKEKFWKPPSTPRAYWNREQEKLNRWYNPILNRVANQTGELATSPNTSHLSYCEPDSTVMTAVTDFNNLPDRFKDFLLYLRCRNYSLLIDQPKKCAKKPFLLLAIKSLIPHFARRQAIRESWGRETNVGNQTVVRVFLLGKTPPEDNHPDLSDMLKFESDKHQDILMWNYRDTFFNLSLKEVLFLRWVSTSCPDAEFVFKGDDDVFVNTHHILNYLNSLSKSKAKDLFIGDVIHNAGPHRDKKLKYYIPEVFYTGVYPPYAGGGGFLYSGPLALRLYSATSRVHLYPIDDVYTGMCLQKLGLVPEKHKGFRTFDIEEKNKKNICSYIDLMLVHSRKPQEMIDIWSQLQSPNLKC.

Over 1–7 (MSVGRRR) the chain is Cytoplasmic. The helical; Signal-anchor for type II membrane protein transmembrane segment at 8–28 (VKLLGILMMANVFIYLIVEVS) threads the bilayer. Residues 29–325 (KNSSQDKNGK…ALRLYSATSR (297 aa)) are Lumenal-facing. N30, N79, N89, N127, N173, and N219 each carry an N-linked (GlcNAc...) asparagine glycan.

The protein belongs to the glycosyltransferase 31 family. In terms of assembly, interacts with B3GNT8; this interaction greatly increases B3GNT2 catalytic activity, independently of B3GNT8 enzymatic activity. Mn(2+) serves as cofactor. As to expression, expressed in heart, brain, lung, kidney and testis and, to a lesser extent, in liver and skeletal muscle. No expression in spleen.

Its subcellular location is the golgi apparatus membrane. It carries out the reaction a beta-D-galactosyl-(1-&gt;4)-N-acetyl-beta-D-glucosaminyl derivative + UDP-N-acetyl-alpha-D-glucosamine = an N-acetyl-beta-D-glucosaminyl-(1-&gt;3)-beta-D-galactosyl-(1-&gt;4)-N-acetyl-beta-D-glucosaminyl derivative + UDP + H(+). Its pathway is protein modification; protein glycosylation. Its function is as follows. Beta-1,3-N-acetylglucosaminyltransferase involved in the synthesis of poly-N-acetyllactosamine. Catalyzes the initiation and elongation of poly-N-acetyllactosamine chains. Probably constitutes the main polylactosamine synthase. This chain is N-acetyllactosaminide beta-1,3-N-acetylglucosaminyltransferase 2 (B3GNT2), found in Mus musculus (Mouse).